The sequence spans 214 residues: Uridine kinase (214 aa).

15 to 22 contributes to the ATP binding site; sequence GASASGKS.

It belongs to the uridine kinase family.

Its subcellular location is the cytoplasm. It catalyses the reaction uridine + ATP = UMP + ADP + H(+). It carries out the reaction cytidine + ATP = CMP + ADP + H(+). It functions in the pathway pyrimidine metabolism; CTP biosynthesis via salvage pathway; CTP from cytidine: step 1/3. The protein operates within pyrimidine metabolism; UMP biosynthesis via salvage pathway; UMP from uridine: step 1/1. The chain is Uridine kinase from Aeromonas hydrophila subsp. hydrophila (strain ATCC 7966 / DSM 30187 / BCRC 13018 / CCUG 14551 / JCM 1027 / KCTC 2358 / NCIMB 9240 / NCTC 8049).